The sequence spans 317 residues: Tricarboxylate transport protein B, mitochondrial (317 aa).

A propeptide spans 1–20 (MSGSPKFVSPFHRPHCLSAA) (removed in mature form). Solcar repeat units follow at residues 29–117 (THPG…LSNQ), 128–214 (TRGL…LRNW), and 224–309 (INPV…VVKV). The next 4 helical transmembrane spans lie at 35 to 55 (ILAGGIAGGIEICITFPTEYV), 130 to 150 (GLICGLGAGVAEAVVVVCPME), 223 to 243 (SINPVVTGLFGAVAGAASVFG), and 294 to 314 (MDVAIVFIIYEEVVKVLNKVW).

It belongs to the mitochondrial carrier (TC 2.A.29) family. Post-translationally, possesses a short cleavable presequence, which, however, is found to be dispensable both for targeting to mitochondria and insertion into the inner membrane. However, the presequence is required to keep SLC25A1 in a soluble state and thus in an import-competent state. Mature SLC25A1 lacking the presequence is prone to aggregation.

It localises to the mitochondrion inner membrane. The catalysed reaction is (S)-malate(in) + citrate(out) = (S)-malate(out) + citrate(in). It catalyses the reaction D-threo-isocitrate(in) + citrate(out) = D-threo-isocitrate(out) + citrate(in). The enzyme catalyses citrate(out) + succinate(in) = citrate(in) + succinate(out). It carries out the reaction cis-aconitate(in) + citrate(out) = cis-aconitate(out) + citrate(in). The catalysed reaction is trans-aconitate(in) + citrate(out) = trans-aconitate(out) + citrate(in). It catalyses the reaction phosphoenolpyruvate(in) + citrate(out) = phosphoenolpyruvate(out) + citrate(in). The enzyme catalyses maleate(in) + citrate(out) = maleate(out) + citrate(in). Mitochondrial electroneutral antiporter that exports citrate from the mitochondria into the cytosol in exchange for malate. Also able to mediate the exchange of citrate for isocitrate, phosphoenolpyruvate, cis-aconitate and to a lesser extent trans-aconitate, maleate and succinate. In the cytoplasm, citrate plays important roles in fatty acid and sterol synthesis, regulation of glycolysis, protein acetylation, and other physiopathological processes. The polypeptide is Tricarboxylate transport protein B, mitochondrial (Danio rerio (Zebrafish)).